Here is a 192-residue protein sequence, read N- to C-terminus: UPF0312 protein PputW619_0484 (192 aa).

A signal peptide spans 1-23 (MLKKTFAALALGTALLSAGQAMA).

Belongs to the UPF0312 family. Type 1 subfamily.

The protein resides in the periplasm. The chain is UPF0312 protein PputW619_0484 from Pseudomonas putida (strain W619).